A 213-amino-acid chain; its full sequence is MIVIFLGPPGAGKGTQGKKIAKKIDLPHIAVGDIFRTIIKTSTSEAELINNYVKQGALIPNEIVNQVIKVFLLSSKYKNGYILDGYPRNLEQAKFFEAFIQKPQIKIIYFDVADELLIKRVLGRYSCKNCGKIYNIHFLQPKIEHVCDVCSSSVFDYRKDDNKEVIKKRIKVYKTETYPLIDYYKNSGNFYIVNANKNEQEIENDIQKILKIN.

10 to 15 (GAGKGT) provides a ligand contact to ATP. Residues 30-59 (AVGDIFRTIIKTSTSEAELINNYVKQGALI) are NMP. Residues Arg36, 57–59 (ALI), 85–88 (GYPR), and Gln92 each bind AMP. The tract at residues 123-161 (GRYSCKNCGKIYNIHFLQPKIEHVCDVCSSSVFDYRKDD) is LID. Arg124 serves as a coordination point for ATP. Zn(2+) is bound by residues Cys127 and Cys130. Position 133–134 (133–134 (IY)) interacts with ATP. Cys147 and Cys150 together coordinate Zn(2+). Residues Arg158 and Arg169 each coordinate AMP. Lys197 contacts ATP.

The protein belongs to the adenylate kinase family. As to quaternary structure, monomer.

It is found in the cytoplasm. The enzyme catalyses AMP + ATP = 2 ADP. It participates in purine metabolism; AMP biosynthesis via salvage pathway; AMP from ADP: step 1/1. In terms of biological role, catalyzes the reversible transfer of the terminal phosphate group between ATP and AMP. Plays an important role in cellular energy homeostasis and in adenine nucleotide metabolism. The protein is Adenylate kinase of Rickettsia prowazekii (strain Madrid E).